Reading from the N-terminus, the 555-residue chain is High-affinity gluconate transporter ght3 (555 aa).

Residues 1 to 9 (MNRFITSIL) are Cytoplasmic-facing. The helical transmembrane segment at 10–30 (VVFISMSGWLQGADTGSISGI) threads the bilayer. Over 31 to 58 (LGMRDFQSRFADRYNPISNSYSYSAWRQ) the chain is Extracellular. Residues 59 to 79 (ALLTGTINAGCLFGAMLSSPF) form a helical membrane-spanning segment. The Cytoplasmic portion of the chain corresponds to 80–87 (TERIGKKY). The chain crosses the membrane as a helical span at residues 88–108 (SICFFSGVYIIAELLLVTAVP). Residues 109 to 112 (SWIQ) are Extracellular-facing. Residues 113 to 133 (VLVGKILAGVGIGALSVLSPG) traverse the membrane as a helical segment. Residues 134–144 (YQSEVAPPQIR) are Cytoplasmic-facing. Residues 145 to 165 (GAVVATYQIFSTGAALVAACI) form a helical membrane-spanning segment. Residues 166–179 (NMGTHKLRKTASWR) are Extracellular-facing. A helical membrane pass occupies residues 180-200 (TSFGINMLWGILLMVGVLFLP). The Cytoplasmic portion of the chain corresponds to 201–266 (ESPRYLIYKG…IFGKDIRYRT (66 aa)). Residues 267 to 285 (CLGFLVMLFRELIGNNYYF) traverse the membrane as a helical segment. Over 286–301 (YYATQVFKGTGMTDIF) the chain is Extracellular. A helical membrane pass occupies residues 302-322 (LPAVILGAINFGTTFGALYTI). Residues 323–328 (DNLGRR) are Cytoplasmic-facing. Residues 329–349 (NPLIFGAAFQSICFFIYAAVG) traverse the membrane as a helical segment. The Extracellular segment spans residues 350–363 (DRKLIYKNGTSDHR). Residue Asn-357 is glycosylated (N-linked (GlcNAc...) asparagine). Residues 364–384 (AGSVMIVFSCLFLFSYCCSWG) form a helical membrane-spanning segment. The Cytoplasmic portion of the chain corresponds to 385-404 (PMGWVIVGETFPIRYRSKCA). Residues 405 to 425 (SVATSGNWLGNFMISFFTPFI) traverse the membrane as a helical segment. Over 426-432 (NNAIGFK) the chain is Extracellular. The helical transmembrane segment at 433–453 (LGYIYACINLFSSFMIFFLAK) threads the bilayer. Over 454–555 (ETKGLTLEEV…FSEDSHPTYI (102 aa)) the chain is Cytoplasmic. Residues 492 to 509 (KEEEKREREKSKGIRGQE) show a composition bias toward basic and acidic residues. The disordered stretch occupies residues 492-555 (KEEEKREREK…FSEDSHPTYI (64 aa)). Positions 510 to 521 (EEFIENADEDNN) are enriched in acidic residues. Positions 522-534 (DSSSSSGSVVSAV) are enriched in low complexity. A compositionally biased stretch (basic and acidic residues) spans 545 to 555 (RFSEDSHPTYI).

The protein belongs to the major facilitator superfamily. Sugar transporter (TC 2.A.1.1) family.

It is found in the membrane. High-affinity gluconate transporter. The chain is High-affinity gluconate transporter ght3 (ght3) from Schizosaccharomyces pombe (strain 972 / ATCC 24843) (Fission yeast).